The sequence spans 180 residues: MTVRLREKYYKEVVPALMEEFKFKSIMQVPRLVKIVVNVGVGEAVQNAKAIEAAVNDVAAITGQKPVVTRAKKSVASFKLRAGMPIGVMVTLRGDRMYDFLDRLCSLALPRIRDFRGVSRSSFDGRGNYSIGLKEQIVFPDIDYDKIDKIRGLEVAIVTSAPNDEQAYSLLKRLGMPFRD.

The protein belongs to the universal ribosomal protein uL5 family. In terms of assembly, part of the 50S ribosomal subunit; part of the 5S rRNA/L5/L18/L25 subcomplex. Contacts the 5S rRNA and the P site tRNA. Forms a bridge to the 30S subunit in the 70S ribosome.

In terms of biological role, this is one of the proteins that bind and probably mediate the attachment of the 5S RNA into the large ribosomal subunit, where it forms part of the central protuberance. In the 70S ribosome it contacts protein S13 of the 30S subunit (bridge B1b), connecting the 2 subunits; this bridge is implicated in subunit movement. Contacts the P site tRNA; the 5S rRNA and some of its associated proteins might help stabilize positioning of ribosome-bound tRNAs. The sequence is that of Large ribosomal subunit protein uL5 from Chloroflexus aggregans (strain MD-66 / DSM 9485).